The chain runs to 228 residues: HTH-type transcriptional regulator TfdT (228 aa).

Positions 1 to 58 (MEIRQLKYFVAVAEAGGFGTAAQRMHISQPPLTRQIQALERDIGAKLFERTARGVELT) constitute an HTH lysR-type domain. The H-T-H motif DNA-binding region spans 18-37 (FGTAAQRMHISQPPLTRQIQ).

The protein belongs to the LysR transcriptional regulatory family.

It is found in the cytoplasm. Its function is as follows. Does not seem to be involved in the regulation of 3-chlorocatechol degradation. Does not activate the expression of its presumed target operon, tfdCDEF. The polypeptide is HTH-type transcriptional regulator TfdT (tfdT) (Cupriavidus pinatubonensis (strain JMP 134 / LMG 1197) (Cupriavidus necator (strain JMP 134))).